Reading from the N-terminus, the 1640-residue chain is Clathrin heavy chain 2 (1640 aa).

Alanine 2 carries the post-translational modification N-acetylalanine. The globular terminal domain stretch occupies residues 2 to 479; it reads AQILPVRFQE…TDPMLALSVY (478 aa). WD40-like repeat regions lie at residues 24–67, 68–107, 108–149, 150–195, 196–257, 258–301, and 302–330; these read NIGF…RPIS, AESA…MAEE, VIFW…TSLV, GCQV…QPIE, GHAA…PEAQ, NDFP…ISAD, and TIFV…VCVE. A Phosphoserine modification is found at serine 67. Tyrosine 184 bears the Phosphotyrosine mark. At threonine 394 the chain carries Phosphothreonine. The binding site for the uncoating ATPase, involved in lattice disassembly stretch occupies residues 449–465; the sequence is EKWLKEDKLECSEELGD. Positions 480–523 are flexible linker; that stretch reads LRANVPSKVIQCFAETGQFQKIVLYAKKVGYTPDWIFLLRGVMK. The interval 524–634 is distal segment; sequence ISPEQGLQFS…QALEHYTDLY (111 aa). Positions 524-1640 are heavy chain arm; sequence ISPEQGLQFS…PLVFDFDGHE (1117 aa). CHCR repeat units lie at residues 537–683, 686–828, 833–972, 979–1124, 1128–1269, 1274–1420, and 1423–1566; these read VQDE…QLCV, ASKY…SEEV, IMAV…QLID, LSET…VKEA, YIRG…FRFA, LHIV…LLIN, and LLVL…RECF. Tyrosine 634 bears the Phosphotyrosine mark. A proximal segment region spans residues 639-1640; the sequence is AVVHTHLLNP…PLVFDFDGHE (1002 aa). N6-succinyllysine is present on lysine 737. The residue at position 856 (lysine 856) is an N6-acetyllysine. Residue tyrosine 899 is modified to Phosphotyrosine. Serine 1167 bears the Phosphoserine mark. The residue at position 1206 (tyrosine 1206) is a Phosphotyrosine. An involved in binding clathrin light chain region spans residues 1213–1522; sequence AAKLLYSNVS…YLYKGNNWWA (310 aa). A Phosphoserine modification is found at serine 1229. Position 1441 is an N6-acetyllysine; alternate (lysine 1441). At lysine 1441 the chain carries N6-succinyllysine; alternate. Residues tyrosine 1477 and tyrosine 1487 each carry the phosphotyrosine modification. Serine 1494 bears the Phosphoserine mark. N6-acetyllysine is present on lysine 1501. The segment at 1551–1640 is trimerization; the sequence is QKLLQWFLEE…PLVFDFDGHE (90 aa).

Belongs to the clathrin heavy chain family. In terms of assembly, clathrin triskelions, composed of 3 heavy chains and 3 light chains, are the basic subunits of the clathrin coat. In the presence of light chains, hub assembly is influenced by both the pH and the concentration of calcium. May interact with OCRL. Interacts with AFTPH/aftiphilin. In terms of tissue distribution, maximal levels in skeletal muscle. High levels in heart and testis. Low expression detected in all other tissues.

The protein localises to the cytoplasmic vesicle membrane. The protein resides in the membrane. Its subcellular location is the coated pit. In terms of biological role, clathrin is the major protein of the polyhedral coat of coated pits and vesicles. Two different adapter protein complexes link the clathrin lattice either to the plasma membrane or to the trans-Golgi network. The protein is Clathrin heavy chain 2 (CLTCL1) of Homo sapiens (Human).